Here is a 290-residue protein sequence, read N- to C-terminus: Short neuropeptide F (290 aa).

The N-terminal stretch at 1–32 is a signal peptide; sequence MFRFNPQLSHGCALALICCLLNLLMMHQPTNA. Positions 33 to 87 are excised as a propeptide; sequence ELSPVVQGEFFLPILPDDHPPNTDTSFGGPISNLYDNLLQREYAGPVVFPNHQVE. A phenylalanine amide mark is found at F100 and F134. The propeptide occupies 138-290; it reads DPTLPQMRRT…IETSSIAPKN (153 aa). The tract at residues 238–290 is disordered; the sequence is VAGYANDGDDTEAQLDEDTSEFQREARKPMRLRWGRSTGKAPQIETSSIAPKN. Residues 244 to 257 are compositionally biased toward acidic residues; it reads DGDDTEAQLDEDTS. The span at 281–290 shows a compositional bias: polar residues; it reads IETSSIAPKN.

It belongs to the NPY family.

The protein resides in the secreted. Plays a role in controlling food intake and regulating body size. This chain is Short neuropeptide F, found in Drosophila pseudoobscura pseudoobscura (Fruit fly).